Reading from the N-terminus, the 324-residue chain is Beta-ketoacyl-[acyl-carrier-protein] synthase III (324 aa).

Catalysis depends on residues C113 and H251. Residues 252-256 are ACP-binding; it reads QANKR. The active site involves N281.

The protein belongs to the thiolase-like superfamily. FabH family. As to quaternary structure, homodimer.

The protein resides in the cytoplasm. The enzyme catalyses malonyl-[ACP] + acetyl-CoA + H(+) = 3-oxobutanoyl-[ACP] + CO2 + CoA. Its pathway is lipid metabolism; fatty acid biosynthesis. Its function is as follows. Catalyzes the condensation reaction of fatty acid synthesis by the addition to an acyl acceptor of two carbons from malonyl-ACP. Catalyzes the first condensation reaction which initiates fatty acid synthesis and may therefore play a role in governing the total rate of fatty acid production. Possesses both acetoacetyl-ACP synthase and acetyl transacylase activities. Its substrate specificity determines the biosynthesis of branched-chain and/or straight-chain of fatty acids. The protein is Beta-ketoacyl-[acyl-carrier-protein] synthase III of Bartonella bacilliformis (strain ATCC 35685 / KC583 / Herrer 020/F12,63).